Here is a 388-residue protein sequence, read N- to C-terminus: Probable peptidoglycan glycosyltransferase FtsW (388 aa).

The Cytoplasmic portion of the chain corresponds to 1–19 (MMSPSTSAPHNQPIQPELD). A helical transmembrane segment spans residues 20–40 (VLLVSTVLLLLGLGLVMVYSA). Over 41 to 55 (SIAIAEAKFGEGSSY) the chain is Periplasmic. Residues 56-76 (YFLARQASYILAGIAVGIGCF) traverse the membrane as a helical segment. Residues 77-89 (RIPLRWWQAYSHY) lie on the Cytoplasmic side of the membrane. The helical transmembrane segment at 90 to 110 (LLGLGILLLLVVLIPGISHEI) threads the bilayer. The Periplasmic portion of the chain corresponds to 111 to 116 (NGSRRW). Residues 117-137 (IPLGITSFQPSELMKLIILIF) form a helical membrane-spanning segment. Residues 138–151 (TADYVVRKAAFKDH) are Cytoplasmic-facing. Residues 152–172 (FFKGFLPILALLTIVSLLLLM) traverse the membrane as a helical segment. The Periplasmic portion of the chain corresponds to 173–175 (EPD). 2 helical membrane-spanning segments follow: residues 176 to 196 (LGATVVIAAIVLSIMFMNGMS) and 197 to 217 (LKMFFGLICLVPVLLALLIII). Over 218–284 (EPYRMDRINA…DFMFAVLAEE (67 aa)) the chain is Periplasmic. Residues 285 to 305 (LGFAGVVTVISLFFFLLVRIF) traverse the membrane as a helical segment. Over 306–324 (KVGRTAARLGDQFGSLVAQ) the chain is Cytoplasmic. Residues 325–345 (GIGVWLGLQAFINMGVNMGLL) traverse the membrane as a helical segment. Residues 346-351 (PTKGLT) are Periplasmic-facing. The helical transmembrane segment at 352–372 (LPFMSYGGSSIVINSIAIAIL) threads the bilayer. At 373-388 (LRIDWENRLKRRGLNA) the chain is on the cytoplasmic side.

Belongs to the SEDS family. FtsW subfamily.

The protein resides in the cell inner membrane. The enzyme catalyses [GlcNAc-(1-&gt;4)-Mur2Ac(oyl-L-Ala-gamma-D-Glu-L-Lys-D-Ala-D-Ala)](n)-di-trans,octa-cis-undecaprenyl diphosphate + beta-D-GlcNAc-(1-&gt;4)-Mur2Ac(oyl-L-Ala-gamma-D-Glu-L-Lys-D-Ala-D-Ala)-di-trans,octa-cis-undecaprenyl diphosphate = [GlcNAc-(1-&gt;4)-Mur2Ac(oyl-L-Ala-gamma-D-Glu-L-Lys-D-Ala-D-Ala)](n+1)-di-trans,octa-cis-undecaprenyl diphosphate + di-trans,octa-cis-undecaprenyl diphosphate + H(+). Its pathway is cell wall biogenesis; peptidoglycan biosynthesis. Peptidoglycan polymerase that is essential for cell division. This is Probable peptidoglycan glycosyltransferase FtsW from Nitrosomonas europaea (strain ATCC 19718 / CIP 103999 / KCTC 2705 / NBRC 14298).